A 206-amino-acid polypeptide reads, in one-letter code: Thymidylate kinase (206 aa).

10 to 17 (GIDGAGKS) provides a ligand contact to ATP.

The protein belongs to the thymidylate kinase family.

The catalysed reaction is dTMP + ATP = dTDP + ADP. Phosphorylation of dTMP to form dTDP in both de novo and salvage pathways of dTTP synthesis. The chain is Thymidylate kinase (tmk) from Neisseria meningitidis serogroup A / serotype 4A (strain DSM 15465 / Z2491).